Reading from the N-terminus, the 466-residue chain is GTPase Der (466 aa).

2 consecutive EngA-type G domains span residues 3-167 (PTLV…PDEP) and 176-350 (PKIA…GAAM). GTP contacts are provided by residues 9 to 16 (GRSNVGKS), 56 to 60 (DTGGF), 119 to 122 (NKTE), 182 to 189 (GRPNVGKS), 229 to 233 (DTAGL), and 294 to 297 (NKWD). A KH-like domain is found at 351-435 (AHLPTPRLTR…PLRIEFRTGR (85 aa)). The disordered stretch occupies residues 433–466 (TGRNPYAGKSPAPLTEAEAKRAHRRRRYGRKKYG). The segment covering 453-466 (RAHRRRRYGRKKYG) has biased composition (basic residues).

This sequence belongs to the TRAFAC class TrmE-Era-EngA-EngB-Septin-like GTPase superfamily. EngA (Der) GTPase family. In terms of assembly, associates with the 50S ribosomal subunit.

Its function is as follows. GTPase that plays an essential role in the late steps of ribosome biogenesis. The polypeptide is GTPase Der (Nitrosospira multiformis (strain ATCC 25196 / NCIMB 11849 / C 71)).